We begin with the raw amino-acid sequence, 441 residues long: Probable D-serine dehydratase (441 aa).

At Lys-117 the chain carries N6-(pyridoxal phosphate)lysine.

This sequence belongs to the serine/threonine dehydratase family. DsdA subfamily. The cofactor is pyridoxal 5'-phosphate.

It carries out the reaction D-serine = pyruvate + NH4(+). This Acinetobacter baylyi (strain ATCC 33305 / BD413 / ADP1) protein is Probable D-serine dehydratase.